A 235-amino-acid chain; its full sequence is dITP/XTP pyrophosphatase (235 aa).

A substrate-binding site is contributed by 7-12 (STNPGK). Asp70 serves as the catalytic Proton acceptor. A Mg(2+)-binding site is contributed by Asp70. Substrate contacts are provided by residues Ser71, 180 to 183 (FGYD), Lys211, and 216 to 217 (HR).

This sequence belongs to the HAM1 NTPase family. As to quaternary structure, homodimer. The cofactor is Mg(2+).

The enzyme catalyses XTP + H2O = XMP + diphosphate + H(+). The catalysed reaction is dITP + H2O = dIMP + diphosphate + H(+). It carries out the reaction ITP + H2O = IMP + diphosphate + H(+). In terms of biological role, pyrophosphatase that catalyzes the hydrolysis of nucleoside triphosphates to their monophosphate derivatives, with a high preference for the non-canonical purine nucleotides XTP (xanthosine triphosphate), dITP (deoxyinosine triphosphate) and ITP. Seems to function as a house-cleaning enzyme that removes non-canonical purine nucleotides from the nucleotide pool, thus preventing their incorporation into DNA/RNA and avoiding chromosomal lesions. The protein is dITP/XTP pyrophosphatase of Anaeromyxobacter dehalogenans (strain 2CP-C).